A 474-amino-acid chain; its full sequence is Coronin-1C (474 aa).

WD repeat units lie at residues 25–70 (DDIR…GRID), 78–118 (GHTG…LTLS), 128–168 (GHSK…ALIN), 172–202 (MHSD…RVID), 215–249 (AHEG…ALWN), and 263–303 (DTSN…PYVH). The stretch at 436–474 (QNEAKLDEILKEIKSIKDTICNQDERISKLEQQMAKIAA) forms a coiled coil. Lys446 bears the N6-acetyllysine mark.

This sequence belongs to the WD repeat coronin family. In terms of assembly, binds F-actin. Interacts with RCC2. Interacts preferentially with nucleotide-free and GDP-bound RAC1. Interacts with VIM (via head domain). Isoform 1 and isoform 2 appear as homotrimers, while isoform 3 seems to exist as monomers. Interacts with MICAL2; this interaction recruits MICAL2 to the actin filaments. In terms of tissue distribution, ubiquitous.

It localises to the cell membrane. The protein localises to the cell projection. It is found in the lamellipodium. The protein resides in the ruffle membrane. Its subcellular location is the cytoplasm. It localises to the cytoskeleton. The protein localises to the cell cortex. It is found in the endosome membrane. The protein resides in the sarcolemma. Its subcellular location is the myofibril. It localises to the sarcomere. The protein localises to the synapse. Its function is as follows. Plays a role in directed cell migration by regulating the activation and subcellular location of RAC1. Increases the presence of activated RAC1 at the leading edge of migrating cells. Required for normal organization of the cytoskeleton, including the actin cytoskeleton, microtubules and the vimentin intermediate filaments. Plays a role in endoplasmic reticulum-associated endosome fission: localizes to endosome membrane tubules and promotes recruitment of TMCC1, leading to recruitment of the endoplasmic reticulum to endosome tubules for fission. Endosome membrane fission of early and late endosomes is essential to separate regions destined for lysosomal degradation from carriers to be recycled to the plasma membrane. Required for normal cell proliferation, cell migration, and normal formation of lamellipodia. Required for normal distribution of mitochondria within cells. Functionally, involved in myogenic differentiation. The protein is Coronin-1C of Homo sapiens (Human).